The sequence spans 179 residues: Stathmin-2 (179 aa).

A membrane attachment region spans residues 1–26 (MAKTAMAYKEKMKELSMLSLICSCFY). Phosphoserine is present on Ser-16. Residues Cys-22 and Cys-24 are each lipidated (S-palmitoyl cysteine). One can recognise an SLD domain in the interval 38-179 (DDMEVKQINK…NKELQVELSG (142 aa)). The segment at 39 to 96 (DMEVKQINKRASGQAFELILKPPSPISEAPRTLASPKKKDLSLEEIQKKLEAAEGRRK) is regulatory/phosphorylation domain. A Phosphoserine modification is found at Ser-50. Phosphoserine; by MAPK8 is present on residues Ser-62 and Ser-73. A coiled-coil region spans residues 75-179 (KKKDLSLEEI…NKELQVELSG (105 aa)). 2 positions are modified to phosphoserine: Ser-80 and Ser-97.

The protein belongs to the stathmin family. In terms of assembly, interacts with ITM2C. Interacts with MAPK8. Interacts with KIFBP. Interacts (via the N-terminal region) with CIB1 (via C-terminal region); the interaction is direct, occurs in a calcium-dependent manner and attenuates the neurite outgrowth inhibition of STMN2. In terms of processing, sumoylated. Phosphorylated by MAPK9 and MAPK10 in the developing brain cortex. Phosphorylated mostly by MAPK8. Post-translationally, N-terminal palmitoylation promotes specific anchoring to the cytosolic leaflet of Golgi membranes and subsequent vesicular trafficking along dendrites and axons. Neuronal Stathmins are substrates for palmitoyltransferases ZDHHC3, ZDHHC7 and ZDHHC15. As to expression, expressed in neurons (at protein level). Present in growth cones and abundant in developing neurons.

It localises to the cytoplasm. It is found in the perinuclear region. The protein localises to the cell projection. The protein resides in the growth cone. Its subcellular location is the axon. It localises to the membrane. It is found in the golgi apparatus. The protein localises to the endosome. The protein resides in the lamellipodium. In terms of biological role, regulator of microtubule stability. When phosphorylated by MAPK8, stabilizes microtubules and consequently controls neurite length in cortical neurons. In the developing brain, negatively regulates the rate of exit from multipolar stage and retards radial migration from the ventricular zone. The chain is Stathmin-2 (Stmn2) from Rattus norvegicus (Rat).